The following is a 278-amino-acid chain: HTH-type transcriptional regulator HdfR (278 aa).

The 58-residue stretch at 1 to 58 (MDTELLKTFLEVSRTRHFGRAAEALYLTQSAVSFRIRQLENQLGVNLFTRHRNNIRLT) folds into the HTH lysR-type domain. The segment at residues 18 to 37 (FGRAAEALYLTQSAVSFRIR) is a DNA-binding region (H-T-H motif).

The protein belongs to the LysR transcriptional regulatory family.

Negatively regulates the transcription of the flagellar master operon flhDC by binding to the upstream region of the operon. The protein is HTH-type transcriptional regulator HdfR of Salmonella agona (strain SL483).